Consider the following 430-residue polypeptide: Aspartate aminotransferase, mitochondrial (430 aa).

The N-terminal 29 residues, M1–A29, are a transit peptide targeting the mitochondrion. Residue T48 is modified to Phosphothreonine. An N6-acetyllysine modification is found at K59. Residue G65 coordinates substrate. An N6-acetyllysine; alternate modification is found at K73. Residue K73 is modified to N6-succinyllysine; alternate. K82 is subject to N6-acetyllysine. K90 bears the N6-acetyllysine; alternate mark. At K90 the chain carries N6-succinyllysine; alternate. Y96 carries the 3'-nitrotyrosine; alternate modification. Y96 carries the post-translational modification Phosphotyrosine; alternate. N6-acetyllysine; alternate occurs at positions 107 and 122. Residues K107 and K122 each carry the N6-succinyllysine; alternate modification. S143 carries the post-translational modification Phosphoserine. K159 carries the N6-acetyllysine; alternate modification. The residue at position 159 (K159) is an N6-succinyllysine; alternate. W162 lines the substrate pocket. At K185 the chain carries N6-acetyllysine; alternate. K185 is subject to N6-succinyllysine; alternate. Substrate is bound at residue N215. An N6-succinyllysine modification is found at K227. K234 is modified (N6-acetyllysine). 2 positions are modified to N6-acetyllysine; alternate: K279 and K296. K279 carries the post-translational modification N6-(pyridoxal phosphate)lysine; alternate. At K296 the chain carries N6-succinyllysine; alternate. K302 carries the N6-acetyllysine modification. N6-acetyllysine; alternate is present on K309. Position 309 is an N6-succinyllysine; alternate (K309). An Asymmetric dimethylarginine modification is found at R313. At T333 the chain carries Phosphothreonine. At K338 the chain carries N6-acetyllysine; alternate. The residue at position 338 (K338) is an N6-succinyllysine; alternate. K345 carries the post-translational modification N6-acetyllysine. K363 is subject to N6-acetyllysine; alternate. Position 363 is an N6-succinyllysine; alternate (K363). An N6-acetyllysine mark is found at K364 and K387. 2 positions are modified to N6-acetyllysine; alternate: K396 and K404. An N6-succinyllysine; alternate mark is found at K396 and K404. R407 provides a ligand contact to substrate.

This sequence belongs to the class-I pyridoxal-phosphate-dependent aminotransferase family. In terms of assembly, homodimer. It depends on pyridoxal 5'-phosphate as a cofactor.

It localises to the mitochondrion matrix. It is found in the cell membrane. It carries out the reaction L-aspartate + 2-oxoglutarate = oxaloacetate + L-glutamate. The catalysed reaction is L-kynurenine + 2-oxoglutarate = kynurenate + L-glutamate + H2O. Catalyzes the irreversible transamination of the L-tryptophan metabolite L-kynurenine to form kynurenic acid (KA). As a member of the malate-aspartate shuttle, it has a key role in the intracellular NAD(H) redox balance. Is important for metabolite exchange between mitochondria and cytosol, and for amino acid metabolism. Facilitates cellular uptake of long-chain free fatty acids. This chain is Aspartate aminotransferase, mitochondrial, found in Homo sapiens (Human).